The sequence spans 349 residues: MAWIDPEVTKKPKKPMFLCVLSNTKTAHIPKLSAAGKTAELTDYTPAGDAELIETGNIISVPVLPMTPPYDTPTPAIMTRSALKLTEAPYHFINSGLIVTPEVPCIDLKAKPGEDIREPIAVRDVQGIYERAKFLAKRLRSQIDHVVIGESIPGGTTTAMGVLNALGYNGNVSSSADENPLELKKQVVEEGMKASGLTFGSLKDEPMKAIACMGDPMMPAVIGLVAGFQGTEVDVVLAGGTQMAAVYAIIKHLGFNTEKLAIATTRYVVEDKSAHFVELTKTLEVPVVYIADPGFGKSSLKGLHRYETGTIKEGAGAGGAMYLAGLFGVTQDEFRSEVENVCKLLKAGQ.

It belongs to the UPF0284 family.

The chain is UPF0284 protein MA_3887 from Methanosarcina acetivorans (strain ATCC 35395 / DSM 2834 / JCM 12185 / C2A).